Here is a 195-residue protein sequence, read N- to C-terminus: Probable GTP-binding protein EngB (195 aa).

Residues 24–195 (GLSEVGLSGR…QIWNVIEKYL (172 aa)) enclose the EngB-type G domain. Residues 32-39 (GRSNVGKS), 59-63 (GKTQT), 77-80 (DVPG), 144-147 (TKED), and 176-178 (YSS) each bind GTP. Residues S39 and T61 each contribute to the Mg(2+) site.

This sequence belongs to the TRAFAC class TrmE-Era-EngA-EngB-Septin-like GTPase superfamily. EngB GTPase family. Requires Mg(2+) as cofactor.

Its function is as follows. Necessary for normal cell division and for the maintenance of normal septation. This chain is Probable GTP-binding protein EngB, found in Staphylococcus saprophyticus subsp. saprophyticus (strain ATCC 15305 / DSM 20229 / NCIMB 8711 / NCTC 7292 / S-41).